Consider the following 189-residue polypeptide: uncharacterized protein (189 aa).

An N-terminal signal peptide occupies residues 1–19; it reads MKRVLFFLLMIFVSFGVIA.

This is an uncharacterized protein from Escherichia coli (strain K12).